A 387-amino-acid polypeptide reads, in one-letter code: Beta-alanyl-dopamine/carcinine hydrolase (387 aa).

Belongs to the peptidase C45 family. In terms of assembly, the unprocessed protein forms homodimers. May form heterodimers composed of a 15 kDa alpha subunit and a 30 kDa beta subunit. Post-translationally, the protein is synthesized as a 43 kDa precursor which is then self-processed into a 15 kDa alpha subunit and a 30 kDa beta subunit. Processing appears to be necessary for beta-alanyl-dopamine/carcinine hydrolase activity. The beta subunit carries the beta-alanyl-dopamine/carcinine hydrolase activity. In terms of tissue distribution, expressed in body, head, optic lobes and retina (at protein level). Expressed in photoreceptor cells R1-R6 in the lamina and in photoreceptor cells R7 and R8 in the medulla (at protein level).

Its subcellular location is the cell projection. It is found in the axon. It localises to the cytoplasm. The enzyme catalyses carcinine + H2O = histamine + beta-alanine. It carries out the reaction beta-alanyl-dopamine + H2O = dopamine + beta-alanine. In the cuticle, catalyzes the hydrolysis of beta-alanyl-dopamine releasing dopamine and beta-alanine; dopamine is a metabolite involved in the pigmentation and sclerotization of the insect cuticle. In the photoreceptor cells, catalyzes the hydrolysis of carcinine releasing histamine and beta-alanine contributing to the recycling of the neurotransmitter histamine in the optical nerve system. Also, regulates the cuticular hydrocarbon composition in females. The chain is Beta-alanyl-dopamine/carcinine hydrolase from Drosophila melanogaster (Fruit fly).